Reading from the N-terminus, the 274-residue chain is 4-hydroxy-3-methylbut-2-enyl diphosphate reductase (274 aa).

Cys12 contacts [4Fe-4S] cluster. Positions 36 and 70 each coordinate (2E)-4-hydroxy-3-methylbut-2-enyl diphosphate. Positions 36 and 70 each coordinate dimethylallyl diphosphate. The isopentenyl diphosphate site is built by His36 and His70. Cys92 is a binding site for [4Fe-4S] cluster. Residue His120 coordinates (2E)-4-hydroxy-3-methylbut-2-enyl diphosphate. His120 is a binding site for dimethylallyl diphosphate. Residue His120 coordinates isopentenyl diphosphate. Glu122 functions as the Proton donor in the catalytic mechanism. (2E)-4-hydroxy-3-methylbut-2-enyl diphosphate is bound at residue Thr158. Cys186 lines the [4Fe-4S] cluster pocket. The (2E)-4-hydroxy-3-methylbut-2-enyl diphosphate site is built by Ser214, Ser215, Asn216, and Ser258. Residues Ser214, Ser215, Asn216, and Ser258 each contribute to the dimethylallyl diphosphate site. Residues Ser214, Ser215, Asn216, and Ser258 each contribute to the isopentenyl diphosphate site.

Belongs to the IspH family. It depends on [4Fe-4S] cluster as a cofactor.

The enzyme catalyses isopentenyl diphosphate + 2 oxidized [2Fe-2S]-[ferredoxin] + H2O = (2E)-4-hydroxy-3-methylbut-2-enyl diphosphate + 2 reduced [2Fe-2S]-[ferredoxin] + 2 H(+). The catalysed reaction is dimethylallyl diphosphate + 2 oxidized [2Fe-2S]-[ferredoxin] + H2O = (2E)-4-hydroxy-3-methylbut-2-enyl diphosphate + 2 reduced [2Fe-2S]-[ferredoxin] + 2 H(+). It functions in the pathway isoprenoid biosynthesis; dimethylallyl diphosphate biosynthesis; dimethylallyl diphosphate from (2E)-4-hydroxy-3-methylbutenyl diphosphate: step 1/1. The protein operates within isoprenoid biosynthesis; isopentenyl diphosphate biosynthesis via DXP pathway; isopentenyl diphosphate from 1-deoxy-D-xylulose 5-phosphate: step 6/6. In terms of biological role, catalyzes the conversion of 1-hydroxy-2-methyl-2-(E)-butenyl 4-diphosphate (HMBPP) into a mixture of isopentenyl diphosphate (IPP) and dimethylallyl diphosphate (DMAPP). Acts in the terminal step of the DOXP/MEP pathway for isoprenoid precursor biosynthesis. This chain is 4-hydroxy-3-methylbut-2-enyl diphosphate reductase, found in Campylobacter concisus (strain 13826).